The chain runs to 256 residues: tRNA-cytidine(32) 2-sulfurtransferase 1 (256 aa).

Positions 38 to 43 match the PP-loop motif motif; it reads SGGKDS. [4Fe-4S] cluster is bound by residues Cys113, Cys116, and Cys204.

It belongs to the TtcA family. In terms of assembly, homodimer. Mg(2+) is required as a cofactor. It depends on [4Fe-4S] cluster as a cofactor.

The protein resides in the cytoplasm. The enzyme catalyses cytidine(32) in tRNA + S-sulfanyl-L-cysteinyl-[cysteine desulfurase] + AH2 + ATP = 2-thiocytidine(32) in tRNA + L-cysteinyl-[cysteine desulfurase] + A + AMP + diphosphate + H(+). It functions in the pathway tRNA modification. Its function is as follows. Catalyzes the ATP-dependent 2-thiolation of cytidine in position 32 of tRNA, to form 2-thiocytidine (s(2)C32). The sulfur atoms are provided by the cysteine/cysteine desulfurase (IscS) system. The polypeptide is tRNA-cytidine(32) 2-sulfurtransferase 1 (Francisella philomiragia subsp. philomiragia (strain ATCC 25017 / CCUG 19701 / FSC 153 / O#319-036)).